Consider the following 100-residue polypeptide: ATP synthase subunit g 2, mitochondrial (100 aa).

The protein belongs to the ATPase g subunit family. As to quaternary structure, F-type ATPases have 2 components, CF(1) - the catalytic core - and CF(0) - the membrane proton channel. CF(0) seems to have nine subunits: a, b, c, d, e, f, g, F6 and 8 (or A6L).

It localises to the mitochondrion membrane. Functionally, mitochondrial membrane ATP synthase (F(1)F(0) ATP synthase or Complex V) produces ATP from ADP in the presence of a proton gradient across the membrane which is generated by electron transport complexes of the respiratory chain. F-type ATPases consist of two structural domains, F(1) - containing the extramembraneous catalytic core, and F(0) - containing the membrane proton channel, linked together by a central stalk and a peripheral stalk. During catalysis, ATP synthesis in the catalytic domain of F(1) is coupled via a rotary mechanism of the central stalk subunits to proton translocation. Part of the complex F(0) domain. Minor subunit located with subunit a in the membrane. This Homo sapiens (Human) protein is ATP synthase subunit g 2, mitochondrial.